Consider the following 461-residue polypeptide: Probable lipid II flippase MurJ (461 aa).

The next 12 helical transmembrane spans lie at 5-25 (ILGAGVYSDIFFVAFKLPNLF), 51-71 (FASLVGLIFCIVLFMWCLLVA), 96-116 (IVAINFWYLLLVFITTFLGAL), 123-143 (FFASAYSASLLNVCMILALLI), 156-176 (LSYGVLLGGVAQILLHFYPLV), 229-249 (IASFLDTTIASFLASGSVSYL), 258-278 (LPLALFAIAISTALFPSIAIA), 293-313 (KAWFFLVGVLLLCSIGGIMLS), 337-357 (VFSLYLLGLLPFGLTKLFSLW), 372-392 (LISLFLGLAASLSLMPLLGVL), 402-422 (GLFLFVLTIKAFGFQLFLGII), and 429-449 (LVILFLACVEILLLLAFKSWV).

Belongs to the MurJ/MviN family.

Its subcellular location is the cell inner membrane. The protein operates within cell wall biogenesis; peptidoglycan biosynthesis. Its function is as follows. Involved in peptidoglycan biosynthesis. Transports lipid-linked peptidoglycan precursors from the inner to the outer leaflet of the cytoplasmic membrane. The sequence is that of Probable lipid II flippase MurJ from Helicobacter pylori (strain ATCC 700392 / 26695) (Campylobacter pylori).